The chain runs to 354 residues: Homer protein homolog 2 (354 aa).

The WH1 domain maps to 1 to 110 (MGEQPIFTTR…EKFQEVREAA (110 aa)). The stretch at 92-120 (SEQQLTKFAEKFQEVREAARLARDKSQEK) forms a coiled coil. Positions 114–163 (RDKSQEKIETSSNHSQESGCETPSSTQASSVNGTDDEKASHASPADTHLK) are disordered. Positions 123–146 (TSSNHSQESGCETPSSTQASSVNG) are enriched in polar residues. Residues 160–329 (THLKSENDKL…RHLKGELKSF (170 aa)) adopt a coiled-coil conformation.

The protein belongs to the Homer family. As to quaternary structure, isoform 1 and isoform 2 encode coiled-coil structures that mediate homo- and heteromultimerization. Interacts with NFATC2; interaction is reduced by AKT activation. Interacts with NFATC1 and NFATC4. Interacts with DAGLA (via PPXXF motif); this interaction is required for the cell membrane localization of DAGLA. In terms of tissue distribution, constitutively expressed in the adult hippocampus.

The protein localises to the cytoplasm. It is found in the cell membrane. Its subcellular location is the postsynaptic density. The protein resides in the synapse. It localises to the cell projection. The protein localises to the stereocilium. Functionally, postsynaptic density scaffolding protein. Binds and cross-links cytoplasmic regions of GRM1, GRM5, ITPR1, DNM3, RYR1, RYR2, SHANK1 and SHANK3. By physically linking GRM1 and GRM5 with ER-associated ITPR1 receptors, it aids the coupling of surface receptors to intracellular calcium release. May also couple GRM1 to PI3 kinase through its interaction with AGAP2. Isoforms can be differently regulated and may play an important role in maintaining the plasticity at glutamatergic synapses. Required for normal hearing. Negatively regulates T cell activation by inhibiting the calcineurin-NFAT pathway. Acts by competing with calcineurin/PPP3CA for NFAT protein binding, hence preventing NFAT activation by PPP3CA. This chain is Homer protein homolog 2, found in Rattus norvegicus (Rat).